The following is a 94-amino-acid chain: RING finger protein Z (94 aa).

Positions 1-22 are disordered; sequence MGNCNKPPKRPPNTQTSAAQPS. Residue G2 is the site of N-myristoyl glycine; by host attachment. The RING-type; atypical zinc finger occupies 39–75; the sequence is CKCCWFADTNLITCNDHYLCLRCHQTMLRNSELCHIC. Residues 89 to 92 carry the PTAP/PSAP motif motif; sequence PSAP.

Belongs to the arenaviridae Z protein family. In terms of assembly, interacts with protein NP; this interaction probably directs the encapsidated genome to budding sites. Interacts (via RING domain) with polymerase L; this interaction inhibits viral transcription and replication, Z partially blocks the product exit tunnel for the releasing nascent RNA product. Interacts with the glycoprotein complex; this interaction plays a role in virion budding. Interacts with host eIF4E; this interaction results in eIF4E reduced affinity for its substrate, the 5'-m7 G cap structure. Interacts (via late-budding domain) with host TSG101; this interaction is essential for budding and release of viral particles. Interacts with host RPLP0; this interaction may serve to load ribosome-like particles inside the virion. Interacts with host PML; this interaction induces PML bodies redistribution in the cytoplasm upon viral infection. Myristoylation is required for the role of RING finger protein Z in assembly and budding.

It localises to the virion. The protein localises to the host cytoplasm. The protein resides in the host perinuclear region. It is found in the host cell membrane. Functionally, plays a crucial role in virion assembly and budding. Expressed late in the virus life cycle, it acts as an inhibitor of viral transcription and RNA synthesis by interacting with the viral polymerase L. Presumably recruits the NP encapsidated genome to cellular membranes at budding sites via direct interaction with NP. Plays critical roles in the final steps of viral release by interacting with host TSG101, a member of the vacuolar protein-sorting pathway and using other cellular host proteins involved in vesicle formation pathway. The budding of the virus progeny occurs after association of protein Z with the viral glycoprotein complex SSP-GP1-GP2 at the cell periphery, step that requires myristoylation of protein Z. Also selectively represses protein production by associating with host eIF4E. In cell-based minigenome assay, has an inhibitory effect on the ribonucleoprotein machinery (vRNP), which is responsible for the replication and transcription of the viral genome. This is RING finger protein Z from Calomys callosus (Large vesper mouse).